The sequence spans 101 residues: Small ribosomal subunit protein uS14 (101 aa).

It belongs to the universal ribosomal protein uS14 family. In terms of assembly, part of the 30S ribosomal subunit. Contacts proteins S3 and S10.

In terms of biological role, binds 16S rRNA, required for the assembly of 30S particles and may also be responsible for determining the conformation of the 16S rRNA at the A site. This Acinetobacter baylyi (strain ATCC 33305 / BD413 / ADP1) protein is Small ribosomal subunit protein uS14.